Reading from the N-terminus, the 205-residue chain is Ribosomal RNA small subunit methyltransferase G (205 aa).

Residues glycine 66, phenylalanine 71, 119–120 (IE), and arginine 135 each bind S-adenosyl-L-methionine.

Belongs to the methyltransferase superfamily. RNA methyltransferase RsmG family.

Its subcellular location is the cytoplasm. The enzyme catalyses guanosine(527) in 16S rRNA + S-adenosyl-L-methionine = N(7)-methylguanosine(527) in 16S rRNA + S-adenosyl-L-homocysteine. Functionally, specifically methylates the N7 position of guanine in position 527 of 16S rRNA. This Rhizobium etli (strain ATCC 51251 / DSM 11541 / JCM 21823 / NBRC 15573 / CFN 42) protein is Ribosomal RNA small subunit methyltransferase G.